The primary structure comprises 1392 residues: ABC transporter G family member 42 (1392 aa).

A compositionally biased stretch (polar residues) spans 1–18 (MTMSQTDGVEFASRNTNE). Residues 1–26 (MTMSQTDGVEFASRNTNENGHDDDDQ) form a disordered region. An ABC transporter 1 domain is found at 139–413 (SKLSRFMCSN…FEDCGFKCPN (275 aa)). 173–180 (GPPSCGKT) lines the ATP pocket. The 213-residue stretch at 491-703 (DMLKACSRRE…AEIGLTANEF (213 aa)) folds into the ABC transmembrane type-2 1 domain. Transmembrane regions (helical) follow at residues 509–529 (FVYVFKSGLLIFIGFIAMTVY), 543–563 (YLMGSLFFSLFKLLADGLPEL), 596–616 (IPISFLESFLWTMLTYYVIGY), 627–647 (FLILFALHLSCISMFRAIAAV), 652–672 (VVATTVGSISIVLLSVFGGFI), and 739–759 (FGALIGFTLFFNTVFALALTF). An ABC transporter 2 domain is found at 800 to 1045 (FTFQDVQYII…VIEYFMRIHG (246 aa)). 837 to 844 (GVSGAGKT) contacts ATP. Residues 1117-1331 (EQFKACLWKQ…VLNGLLTSQY (215 aa)) enclose the ABC transmembrane type-2 2 domain. The next 7 helical transmembrane spans lie at 1136 to 1156 (YNLTRIIFMSFTCMLCGILFW), 1175 to 1195 (MFTVVLFSGINNCSTVLFSVA), 1215 to 1237 (YSLAQVLVEIPYSLFQSIVYVII), 1255 to 1275 (FYSIFCTLLIFNYFGMLLVVV), 1281 to 1301 (IAFTLRSSFYAIVNLFAGYVM), 1309 to 1329 (WWIWMYYLSPTSWVLNGLLTS), and 1364 to 1384 (LVAVVLIAFPILLASLFAFFI).

It belongs to the ABC transporter superfamily. ABCG family. PDR (TC 3.A.1.205) subfamily. As to expression, confined to shoots.

It localises to the membrane. In terms of biological role, may be a general defense protein. The sequence is that of ABC transporter G family member 42 (ABCG42) from Arabidopsis thaliana (Mouse-ear cress).